The chain runs to 227 residues: [D-Ala2]-deltorphins (227 aa).

The N-terminal stretch at 1–20 (MSFLKKSLLLVLFLGLVSHS) is a signal peptide. Residues 21-46 (VCKEEKRETEEENENEEENHEVGSEM) constitute a propeptide that is removed on maturation. Residues 22–227 (CKEEKRETEE…DVVGGEAKKM (206 aa)) form a disordered region. Residues 30-39 (EEENENEEEN) show a composition bias toward acidic residues. D-alanine (Ala) is present on alanine 50. Residues 57–75 (DTEEKNENEEENQEEGSEM) constitute a propeptide that is removed on maturation. Positions 62–72 (NENEEENQEEG) are enriched in acidic residues. A compositionally biased stretch (basic and acidic residues) spans 73–87 (SEMKRYAFGYPKREP). Alanine 79 carries the post-translational modification D-alanine (Ala). Residues 86 to 104 (EPEEENENEEENHEEGSEM) constitute a propeptide that is removed on maturation. Over residues 88-98 (EEENENEEENH) the composition is skewed to acidic residues. Over residues 99 to 108 (EEGSEMKRYA) the composition is skewed to basic and acidic residues. Alanine 108 carries the D-alanine (Ala) modification. Glycine 113 is subject to Glycine amide. Positions 115 to 140 (EAKKMKREPEEENENEEENHEEGSEM) are excised as a propeptide. Residues 124–134 (EEENENEEENH) show a composition bias toward acidic residues. The segment covering 135–144 (EEGSEMKRYA) has biased composition (basic and acidic residues). Alanine 144 carries the D-alanine (Ala) modification. Position 149 is a glycine amide (glycine 149). The propeptide occupies 151–176 (EAKKMKREPEEENENEEENHEEGSEM). Residues 160 to 170 (EEENENEEENH) are compositionally biased toward acidic residues. Basic and acidic residues predominate over residues 171 to 180 (EEGSEMKRYA). Alanine 180 carries the post-translational modification D-alanine (Ala). Glycine amide is present on glycine 185. Residues 187 to 212 (EAKKMKREPEEENENEEENHEEGSEM) constitute a propeptide that is removed on maturation. Residues 196–206 (EEENENEEENH) show a composition bias toward acidic residues. Positions 207-216 (EEGSEMKRYA) are enriched in basic and acidic residues. Alanine 216 bears the D-alanine (Ala) mark. At glycine 221 the chain carries Glycine amide. A propeptide spanning residues 223–227 (EAKKM) is cleaved from the precursor.

Belongs to the frog skin active peptide (FSAP) family. Dermorphin subfamily. In terms of tissue distribution, expressed by the skin glands.

Its subcellular location is the secreted. Functionally, deltorphin is a heptapeptide with a very potent opiate-like activity. Has high affinity and selectivity for delta-type opioid receptors. The two dermorphin-like peptides have a similar affinity and selectivity for the mu opioid receptor as dermorphin. This chain is [D-Ala2]-deltorphins, found in Phyllomedusa bicolor (Two-colored leaf frog).